The sequence spans 156 residues: Transcription elongation factor GreA (156 aa).

Residues 1–32 (MKKVRLTREGYEKLKQELEELKRKFMYEISER) are a coiled coil.

It belongs to the GreA/GreB family.

In terms of biological role, necessary for efficient RNA polymerase transcription elongation past template-encoded arresting sites. The arresting sites in DNA have the property of trapping a certain fraction of elongating RNA polymerases that pass through, resulting in locked ternary complexes. Cleavage of the nascent transcript by cleavage factors such as GreA or GreB allows the resumption of elongation from the new 3'terminus. GreA releases sequences of 2 to 3 nucleotides. This chain is Transcription elongation factor GreA, found in Thermotoga neapolitana (strain ATCC 49049 / DSM 4359 / NBRC 107923 / NS-E).